Reading from the N-terminus, the 317-residue chain is MTINDSVISEQGMCEEEQVARIAWFYYHDGLTQSEISDRLGLTRLKVSRLLEKGHQSGIIRVQINSRFEGCLEYETQLCRQFSLQHVRVIPGLADADVGGRLGIGAAHMLMSLLQPQQMLAIGFGEATMNTLQRLSGFISSQQIRLVTLSGGVGSYMTGIGQLNAACSVNIIPAPLRASSADIAHTLKNENCVKDVLLAAQAADVAIVGIGAVSQQDDATIIRSGYISQGEQLMIGRKGAVGDILGYFFDAKGDVVTDIKIHNELIGLPLSALKTIPVRVGVAGGENKAEAIAAAMKGGYINALVTDQDTAAAILRS.

The H-T-H motif DNA-binding region spans glutamine 33–glutamine 56.

The protein belongs to the SorC transcriptional regulatory family.

It is found in the cytoplasm. Inactivated by phosphorylated autoinducer-2 (phospho-AI-2). Phospho-AI-2 acts by binding to LsrR, which is then unable to bind to the promoter regions, allowing the transcription of the target genes. Functionally, transcriptional regulator that represses the expression of the lsr operon in the absence of the quorum-sensing signaling molecule autoinducer 2 (AI-2). It also represses the expression of the lsrRK operon. Acts by binding directly to the lsrA and lsrR promoter regions. In the presence of phosphorylated autoinducer-2 (phospho-AI-2), LsrR is inactivated, leading to the transcription of the genes. The protein is Transcriptional regulator LsrR (lsrR) of Escherichia coli (strain SMS-3-5 / SECEC).